Here is a 146-residue protein sequence, read N- to C-terminus: Small ribosomal subunit protein uS5 (146 aa).

The S5 DRBM domain occupies 8–71 (FQEAIVKIGR…DDAFKSLVTV (64 aa)).

The protein belongs to the universal ribosomal protein uS5 family. As to quaternary structure, part of the 30S ribosomal subunit. Contacts proteins S4 and S8.

Its function is as follows. With S4 and S12 plays an important role in translational accuracy. Located at the back of the 30S subunit body where it stabilizes the conformation of the head with respect to the body. The polypeptide is Small ribosomal subunit protein uS5 (Aliarcobacter butzleri (strain RM4018) (Arcobacter butzleri)).